The following is a 346-amino-acid chain: MALLKVKFDQKKRVKLAQGLWLMNWLSVLAGIVIFSLGLFLKIELRKRSDVMNNSESHFVPNSLIVMGVLSCVFNSLAGKICYDALDPAKYAKWKPWLKPYLAVCVLFNIALFLVTLCCFLMRGSLESTLAHGLKNGMKYYRDTDTPGRCFMKKTIDMLQIEFRCCGNNGFRDWFEIQWISNRYLDFSSKEVKDRIKSNVDGRYLVDGVPFSCCNPSSPRPCIQYQLTNNSAHYSYDHQTEELNLWVNGCRAALLSYYSSLMNSMGAVTLLVWLFEVTITIGLRYLHTALEGVSNPEDPECESEGWLLEKSVSETWKAFLESLKKLGKSNQVEAEGADAGQAPEAG.

At 1 to 24 (MALLKVKFDQKKRVKLAQGLWLMN) the chain is on the cytoplasmic side. The helical transmembrane segment at 25–43 (WLSVLAGIVIFSLGLFLKI) threads the bilayer. The Lumenal portion of the chain corresponds to 44 to 61 (ELRKRSDVMNNSESHFVP). The N-linked (GlcNAc...) asparagine glycan is linked to asparagine 53. Residues 62 to 80 (NSLIVMGVLSCVFNSLAGK) form a helical membrane-spanning segment. At 81 to 99 (ICYDALDPAKYAKWKPWLK) the chain is on the cytoplasmic side. Residues 100–123 (PYLAVCVLFNIALFLVTLCCFLMR) traverse the membrane as a helical segment. The Lumenal segment spans residues 124–264 (GSLESTLAHG…LSYYSSLMNS (141 aa)). A glycan (N-linked (GlcNAc...) asparagine) is linked at asparagine 229. A helical transmembrane segment spans residues 265–290 (MGAVTLLVWLFEVTITIGLRYLHTAL). The Cytoplasmic portion of the chain corresponds to 291-346 (EGVSNPEDPECESEGWLLEKSVSETWKAFLESLKKLGKSNQVEAEGADAGQAPEAG). The interaction with MREG stretch occupies residues 341–346 (QAPEAG).

It belongs to the PRPH2/ROM1 family. Homodimer; disulfide-linked. Forms a homotetramer. Forms a heterotetramer with ROM1. Homotetramer and heterotetramer core complexes go on to form higher order complexes by formation of intermolecular disulfide bonds. Interacts with MREG. Interacts with STX3. Interacts with SNAP25. Retina (photoreceptor). In rim region of ROS (rod outer segment) disks.

The protein localises to the membrane. It localises to the cell projection. The protein resides in the cilium. Its subcellular location is the photoreceptor outer segment. It is found in the photoreceptor inner segment. Its function is as follows. Essential for retina photoreceptor outer segment disk morphogenesis, may also play a role with ROM1 in the maintenance of outer segment disk structure. Required for the maintenance of retinal outer nuclear layer thickness. Required for the correct development and organization of the photoreceptor inner segment. The protein is Peripherin-2 (PRPH2) of Canis lupus familiaris (Dog).